A 138-amino-acid chain; its full sequence is Acidic phospholipase A2 jerdoxin (138 aa).

A signal peptide spans 1–16 (MRTLWIMAVLLVGVEG). 7 cysteine pairs are disulfide-bonded: C42/C131, C44/C60, C59/C111, C65/C138, C66/C104, C73/C97, and C91/C102. Residues Y43, G45, and G47 each coordinate Ca(2+). Residue H63 is part of the active site. D64 provides a ligand contact to Ca(2+). D105 is a catalytic residue.

It belongs to the phospholipase A2 family. Group II subfamily. D49 sub-subfamily. In terms of assembly, monomer. Ca(2+) is required as a cofactor. In terms of tissue distribution, expressed by the venom gland.

The protein resides in the secreted. It catalyses the reaction a 1,2-diacyl-sn-glycero-3-phosphocholine + H2O = a 1-acyl-sn-glycero-3-phosphocholine + a fatty acid + H(+). Functionally, snake venom phospholipase A2 (PLA2) that displays edema-inducing activities, exhibits indirect hemolytic activity, and inhibits ADP-induced platelet aggregation. PLA2 catalyzes the calcium-dependent hydrolysis of the 2-acyl groups in 3-sn-phosphoglycerides. The sequence is that of Acidic phospholipase A2 jerdoxin from Protobothrops jerdonii (Jerdon's pitviper).